The sequence spans 291 residues: D-alanine--D-alanine ligase (291 aa).

In terms of domain architecture, ATP-grasp spans 99–291; that stretch reads KRIVKSLGIN…FKKLISIIIT (193 aa). 125-179 contacts ATP; that stretch reads EWNKFPAVVKPVREGSSVGLKIVESLEELKEYALDLLKKTERVMVEEFVEGRDMT. Mg(2+) is bound by residues Asp-245, Glu-258, and Asn-260.

The protein belongs to the D-alanine--D-alanine ligase family. The cofactor is Mg(2+). Mn(2+) serves as cofactor.

The protein localises to the cytoplasm. It catalyses the reaction 2 D-alanine + ATP = D-alanyl-D-alanine + ADP + phosphate + H(+). The protein operates within cell wall biogenesis; peptidoglycan biosynthesis. Cell wall formation. The protein is D-alanine--D-alanine ligase of Aquifex aeolicus (strain VF5).